The following is a 696-amino-acid chain: Carotenoid dioxygenase carX (696 aa).

The span at Met-1–Gln-16 shows a compositional bias: polar residues. The interval Met-1 to His-27 is disordered. Residues His-244, His-298, His-361, and His-642 each contribute to the Fe(2+) site.

Belongs to the carotenoid oxygenase family. The cofactor is Fe(2+).

The enzyme catalyses all-trans-beta-carotene + O2 = 2 all-trans-retinal. The protein operates within carotenoid biosynthesis. In terms of biological role, carotenoid dioxygenase; part of the car gene cluster that mediates the biosynthesis of neurosporaxanthin, a carboxylic apocarotenoid acting as an essential protective pigments and leading to orange pigmentation. CarX mediates the cleavage of beta-carotene produced by carAR into retinal, the rhodopsin's chromophore that is involved in the regulation of the carotenoid biosynthetic pathway via a negative feedback mechanism. It can also convert the synthetic compound beta-apo-8'-carotenal but not C35-apocarotenoids such as the acidic apocarotenoid neurosporaxanthin (C35), as well as its corresponding aldehyde beta-apo-4'-carotenal. This is Carotenoid dioxygenase carX from Gibberella fujikuroi (strain CBS 195.34 / IMI 58289 / NRRL A-6831) (Bakanae and foot rot disease fungus).